The chain runs to 1626 residues: Collagen alpha-1(XXII) chain (1626 aa).

The signal sequence occupies residues 1–27 (MAGLRGNAVAGLLWMLLLWSGGGGCQA). In terms of domain architecture, VWFA spans 38-213 (DLVFLLDTSS…NAIDKIRGKL (176 aa)). A Laminin G-like domain is found at 239–427 (GTKEITGFDL…LQRIVIYCDS (189 aa)). An N-linked (GlcNAc...) asparagine glycan is attached at asparagine 375. 16 Collagen-like domains span residues 481-520 (GEKG…GDVG), 526-565 (QGEK…PGEV), 566-625 (GMRG…PGPS), 657-708 (GEQG…GIPG), 714-773 (GPPG…PGER), 774-833 (GEDG…PGLK), 868-922 (GPKG…GAPG), 925-984 (GAPG…PGKG), 1047-1095 (AGPP…PGKP), 1118-1155 (PPGP…AGPP), 1156-1215 (GLPG…AGPP), 1249-1308 (GKPG…PGKD), 1315-1374 (GPQG…PGEK), 1387-1446 (GEPG…PGPP), 1495-1550 (SQGR…PGAP), and 1575-1604 (DGLP…PPGQ). Disordered stretches follow at residues 506–1002 (PVGA…GPLG), 1019–1103 (GGQC…LLSP), 1119–1458 (PGPP…RGES), and 1491–1609 (YMKS…DPSQ). Residues 544–553 (DGSKGMRGEP) show a composition bias toward basic and acidic residues. Over residues 571-580 (QGPPGLPGPP) the composition is skewed to pro residues. Residues 591 to 606 (ERGEKGTRGEKGERGL) are compositionally biased toward basic and acidic residues. Residues 661–670 (APGPRGHQGA) are compositionally biased toward low complexity. Pro residues-rich tracts occupy residues 715–728 (PPGP…PGPG) and 742–751 (KPGPPGPTGP). 2 stretches are compositionally biased toward basic and acidic residues: residues 769 to 778 (EPGERGEDGL) and 815 to 826 (RGEKGDQGEKGE). Low complexity predominate over residues 908-939 (AHGAPGAAGNPGAPGHVGAPGPSGPPGSVGAP). A compositionally biased stretch (basic and acidic residues) spans 945–957 (PGKDGERGEKGAA). Low complexity-rich tracts occupy residues 959–974 (EEGS…DPGA) and 1056–1065 (PGDKGSPGSR). Basic and acidic residues-rich tracts occupy residues 1131–1151 (KGDK…KKGE) and 1173–1185 (RGAD…KGDQ). Over residues 1205-1223 (ADGIAGAAGPPGIQGSPGK) the composition is skewed to low complexity. Positions 1241-1250 (EEGKEGRDGK) are enriched in basic and acidic residues. Positions 1260 to 1275 (AGEPGLPGPEGARGPP) are enriched in low complexity. Residues 1379–1389 (KEGVPGKPGEP) are compositionally biased toward low complexity. A compositionally biased stretch (basic and acidic residues) spans 1391–1404 (FKGERGDPGIKGDK). Over residues 1405-1414 (GPPGGKGQPG) the composition is skewed to gly residues. A compositionally biased stretch (pro residues) spans 1440–1449 (VGPPGPPGQP). Gly residues predominate over residues 1521–1530 (GRPGQGGLEG). Over residues 1595 to 1604 (LPGPPGPPGQ) the composition is skewed to pro residues.

It belongs to the fibril-associated collagens with interrupted helices (FACIT) family. Restrictive expression is observed at tissue junctions such as the myotendinous junction in skeletal and heart muscle, the articular cartilage-synovial fluid junction, or the border between the anagen hair follicle and the dermis in the skin. It is deposited in the basement membrane zone of the myotendinous junction and the hair follicle and associated with the extrafibrillar matrix in cartilage.

The protein localises to the secreted. It localises to the extracellular space. It is found in the extracellular matrix. Its subcellular location is the cytoplasm. Acts as a cell adhesion ligand for skin epithelial cells and fibroblasts. In Homo sapiens (Human), this protein is Collagen alpha-1(XXII) chain (COL22A1).